A 1077-amino-acid polypeptide reads, in one-letter code: Serine/threonine-protein kinase sel-5 (1077 aa).

Residues V47 to E317 form the Protein kinase domain. ATP contacts are provided by residues I53–V61 and K75. D178 serves as the catalytic Proton acceptor. Disordered regions lie at residues M347–S444, G488–V554, E616–F813, and L920–L1077. Residues I369–T399 are compositionally biased toward polar residues. Basic and acidic residues predominate over residues D491–D515. Residues S541–V554 show a composition bias toward low complexity. Residues L638–P648 show a composition bias toward polar residues. The span at T655–E679 shows a compositional bias: acidic residues. Basic and acidic residues-rich tracts occupy residues D697 to S708 and D739 to D751. A compositionally biased stretch (acidic residues) spans E770–H780. Over residues G799–T810 the composition is skewed to polar residues. The segment covering T927 to K936 has biased composition (pro residues). Positions A941–T950 are enriched in polar residues. Residues K960 to E969 are compositionally biased toward basic residues. The span at K970–S989 shows a compositional bias: basic and acidic residues. The span at L1054–Q1067 shows a compositional bias: polar residues.

It belongs to the protein kinase superfamily. Ser/Thr protein kinase family. Mg(2+) is required as a cofactor.

Its subcellular location is the cytoplasm. It carries out the reaction L-seryl-[protein] + ATP = O-phospho-L-seryl-[protein] + ADP + H(+). The enzyme catalyses L-threonyl-[protein] + ATP = O-phospho-L-threonyl-[protein] + ADP + H(+). Its function is as follows. Serine/threonine-protein kinase which may play a role in lin-12-mediated cell-fate decisions. This chain is Serine/threonine-protein kinase sel-5, found in Caenorhabditis elegans.